A 711-amino-acid polypeptide reads, in one-letter code: MKLKLNVLTIVLLPVHLLITIYSALIFIPWYFLTNAKKKNAMAKRIKAKPTSDKPGSPYRSVTHFDSLAVIDIPGADTLDKLFDHAVAKFGKKDSLGTREILSEENEMQPNGKVFKKLILGNYKWINYLEVNCRVNNFGSGLTALGLKPKNTIAIFCETRAEWMIAAQTCFKYNFPLVTLYATLGKEAVVHGLNESEASYLITSVELLESKLKAALLDINCVKHIIYVDNKTINRAEYPEGLEIHSMQSVEELGSKPENSSIPPSRPTPSDMAIVMYTSGSTGRPKGVMMHHSNLIAGMTGQCERIPGLGPKDTYIGYLPLAHVLELTAEISCFTYGCRIGYSSPLTLSDQSSKIKKGSKGDCTVLKPTLMAAVPEIMDRIYKNVMSKVQEMNYIQKTLFKIGYDYKLEQIKKGYDAPLCNLILFKKVKALLGGNVRMMLSGGAPLSPQTHRFMNVCFCCPIGQGYGLTESCGAGTVTEVTDYTTGRVGAPLICCEIKLKDWQEGGYTVHDKPNPRGEIVIGGQNISMGYFKNEEKTAEDYSVDENGQRWFCTGDIGEFHPDGCLQIIDRKKDLVKLQAGEYVSLGKVEAALKNCPLIDNICAFAKSDQSYVISFVVPNQKKLTLLAQQKGVEGSWVDICNNPAMEAEILKEIREAANAMKLERFEIPIKVRLSPEPWTPETGLVTDAFKLKRKELKNHYLKDIERMYGGK.

A helical; Signal-anchor for type III membrane protein transmembrane segment spans residues 8–28 (LTIVLLPVHLLITIYSALIFI). Topologically, residues 29–711 (PWYFLTNAKK…KDIERMYGGK (683 aa)) are cytoplasmic. S447 bears the Phosphoserine mark.

Belongs to the ATP-dependent AMP-binding enzyme family. Mg(2+) is required as a cofactor.

Its subcellular location is the mitochondrion outer membrane. It localises to the peroxisome membrane. The protein resides in the microsome membrane. It is found in the endoplasmic reticulum membrane. The protein localises to the cell membrane. The enzyme catalyses a long-chain fatty acid + ATP + CoA = a long-chain fatty acyl-CoA + AMP + diphosphate. It catalyses the reaction (5Z,8Z,11Z,14Z)-eicosatetraenoate + ATP + CoA = (5Z,8Z,11Z,14Z)-eicosatetraenoyl-CoA + AMP + diphosphate. It carries out the reaction 15-hydroxy-(5Z,8Z,11Z,13E)-eicosatetraenoate + ATP + CoA = 15-hydroxy-(5Z,8Z,11Z,13E)-eicosatetraenoyl-CoA + AMP + diphosphate. The catalysed reaction is 12-hydroxy-(5Z,8Z,10E,14Z)-eicosatetraenoate + ATP + CoA = 12-hydroxy-(5Z,8Z,10E,14Z)-eicosatetraenoyl-CoA + AMP + diphosphate. The enzyme catalyses 5-hydroxy-(6E,8Z,11Z,14Z)-eicosatetraenoate + ATP + CoA = 5-hydroxy-(6E,8Z,11Z,14Z)-eicosatetraenoyl-CoA + AMP + diphosphate. It catalyses the reaction 5,6-epoxy-(8Z,11Z,14Z)-eicosatrienoate + ATP + CoA = 5,6-epoxy-(8Z,11Z,14Z)-eicosatrienoyl-CoA + AMP + diphosphate. It carries out the reaction 14,15-epoxy-(5Z,8Z,11Z)-eicosatrienoate + ATP + CoA = 14,15-epoxy-(5Z,8Z,11Z)-eicosatrienoyl-CoA + AMP + diphosphate. The catalysed reaction is 11,12-epoxy-(5Z,8Z,14Z)-eicosatrienoate + ATP + CoA = 11,12-epoxy-(5Z,8Z,14Z)-eicosatrienoyl-CoA + AMP + diphosphate. The enzyme catalyses 8,9-epoxy-(5Z,11Z,14Z)-eicosatrienoate + ATP + CoA = 8,9-epoxy-(5Z,11Z,14Z)-eicosatrienoyl-CoA + AMP + diphosphate. It catalyses the reaction hexadecanoate + ATP + CoA = hexadecanoyl-CoA + AMP + diphosphate. It carries out the reaction (E)-hexadec-2-enoate + ATP + CoA = (2E)-hexadecenoyl-CoA + AMP + diphosphate. With respect to regulation, both triacsin C and rosiglitazone inhibit arachidonoyl-CoA ligase activity. Its function is as follows. Catalyzes the conversion of long-chain fatty acids to their active form acyl-CoA for both synthesis of cellular lipids, and degradation via beta-oxidation. Preferentially activates arachidonate and eicosapentaenoate as substrates. Preferentially activates 8,9-EET &gt; 14,15-EET &gt; 5,6-EET &gt; 11,12-EET. Modulates glucose-stimulated insulin secretion by regulating the levels of unesterified EETs. Modulates prostaglandin E2 secretion. The chain is Long-chain-fatty-acid--CoA ligase 4 (Acsl4) from Rattus norvegicus (Rat).